A 478-amino-acid polypeptide reads, in one-letter code: Noelin-2 (478 aa).

A signal peptide spans 1-16 (MSVPLLKIGAVLSTMA). N-linked (GlcNAc...) asparagine glycosylation is found at asparagine 33, asparagine 98, asparagine 179, asparagine 299, asparagine 334, asparagine 423, and asparagine 465. Coiled coils occupy residues 86-109 (SREL…LELR) and 160-218 (LEQY…QKLG). The 253-residue stretch at 218 to 470 (GCGKLTGVSN…QVLYNVTLFH (253 aa)) folds into the Olfactomedin-like domain. The cysteines at positions 219 and 401 are disulfide-linked.

In terms of assembly, peripherally associated with AMPAR complex. AMPAR complex consists of an inner core made of 4 pore-forming GluA/GRIA proteins (GRIA1, GRIA2, GRIA3 and GRIA4) and 4 major auxiliary subunits arranged in a twofold symmetry. One of the two pairs of distinct binding sites is occupied either by CNIH2, CNIH3 or CACNG2, CACNG3. The other harbors CACNG2, CACNG3, CACNG4, CACNG8 or GSG1L. This inner core of AMPAR complex is complemented by outer core constituents binding directly to the GluA/GRIA proteins at sites distinct from the interaction sites of the inner core constituents. Outer core constituents include at least PRRT1, PRRT2, CKAMP44/SHISA9, FRRS1L and NRN1. The proteins of the inner and outer core serve as a platform for other, more peripherally associated AMPAR constituents, including OLFM2. Alone or in combination, these auxiliary subunits control the gating and pharmacology of the AMPAR complex and profoundly impact their biogenesis and protein processing. Interacts with GRIA2. Interacts with OLFM1 and OLFM3. Interacts with SRF; the interaction promotes dissociation of SRF from the transcriptional repressor HEY2. Interacts with RUNX2. Expressed in the brain (at protein level). Expressed in carotid arteries and the aorta, mainly in aortic SMCs.

It localises to the secreted. Its subcellular location is the synapse. It is found in the membrane. The protein resides in the nucleus. The protein localises to the cytoplasm. In terms of biological role, involved in transforming growth factor beta (TGF-beta)-induced smooth muscle differentiation. TGF-beta induces expression and nuclear translocation of OLFM2 where it binds to SRF, causing its dissociation from the transcriptional repressor HEY2/HERP1 and facilitating binding of SRF to target genes. Plays a role in AMPAR complex organization. Is a regulator of vascular smooth-muscle cell (SMC) phenotypic switching, that acts by promoting RUNX2 and inhibiting MYOCD binding to SRF. SMC phenotypic switching is the process through which vascular SMCs undergo transition between a quiescent contractile phenotype and a proliferative synthetic phenotype in response to pathological stimuli. SMC phenotypic plasticity is essential for vascular development and remodeling. The sequence is that of Noelin-2 (Olfm2) from Rattus norvegicus (Rat).